Consider the following 66-residue polypeptide: Putative membrane protein insertion efficiency factor (66 aa).

It belongs to the UPF0161 family.

It localises to the cell inner membrane. Could be involved in insertion of integral membrane proteins into the membrane. The polypeptide is Putative membrane protein insertion efficiency factor (Parasynechococcus marenigrum (strain WH8102)).